Here is a 102-residue protein sequence, read N- to C-terminus: Large ribosomal subunit protein uL24 (102 aa).

Belongs to the universal ribosomal protein uL24 family. In terms of assembly, part of the 50S ribosomal subunit.

Functionally, one of two assembly initiator proteins, it binds directly to the 5'-end of the 23S rRNA, where it nucleates assembly of the 50S subunit. In terms of biological role, one of the proteins that surrounds the polypeptide exit tunnel on the outside of the subunit. The protein is Large ribosomal subunit protein uL24 of Leuconostoc citreum (strain KM20).